The primary structure comprises 432 residues: 23S rRNA (uracil(1939)-C(5))-methyltransferase RlmD (432 aa).

The region spanning 1–54 (MNPVVDILSLDHEGHGVARLDGKVTFVDGALAGERAEIAIFRKHAKYNSANAVA) is the TRAM domain. Positions 67, 73, 76, and 155 each coordinate [4Fe-4S] cluster. Residues glutamine 264, phenylalanine 293, asparagine 298, glutamate 314, asparagine 341, and aspartate 362 each contribute to the S-adenosyl-L-methionine site. Cysteine 389 (nucleophile) is an active-site residue.

The protein belongs to the class I-like SAM-binding methyltransferase superfamily. RNA M5U methyltransferase family. RlmD subfamily.

The enzyme catalyses uridine(1939) in 23S rRNA + S-adenosyl-L-methionine = 5-methyluridine(1939) in 23S rRNA + S-adenosyl-L-homocysteine + H(+). Catalyzes the formation of 5-methyl-uridine at position 1939 (m5U1939) in 23S rRNA. This is 23S rRNA (uracil(1939)-C(5))-methyltransferase RlmD from Thiobacillus denitrificans (strain ATCC 25259 / T1).